A 61-amino-acid polypeptide reads, in one-letter code: Large ribosomal subunit protein uL29 (61 aa).

This sequence belongs to the universal ribosomal protein uL29 family.

This Campylobacter curvus (strain 525.92) protein is Large ribosomal subunit protein uL29.